Here is a 1097-residue protein sequence, read N- to C-terminus: DNA-directed RNA polymerase subunit beta (1097 aa).

A disordered region spans residues 1072 to 1097; it reads QDVNPRRSTPSRPTYESLGVADYDED.

Belongs to the RNA polymerase beta chain family. In terms of assembly, in cyanobacteria the RNAP catalytic core is composed of 2 alpha, 1 beta, 1 beta', 1 gamma and 1 omega subunit. When a sigma factor is associated with the core the holoenzyme is formed, which can initiate transcription.

The enzyme catalyses RNA(n) + a ribonucleoside 5'-triphosphate = RNA(n+1) + diphosphate. DNA-dependent RNA polymerase catalyzes the transcription of DNA into RNA using the four ribonucleoside triphosphates as substrates. This is DNA-directed RNA polymerase subunit beta from Synechococcus sp. (strain CC9605).